The following is a 1043-amino-acid chain: BAG family molecular chaperone regulator 6 (1043 aa).

Disordered regions lie at residues 253–294 (KEEL…GKTV), 311–331 (DVKE…PYPI), 343–366 (VEAS…SDLH), 410–500 (NIPV…AESR), and 533–566 (SVES…KKSF). Composition is skewed to basic and acidic residues over residues 311–324 (DVKE…KEEP), 343–357 (VEAS…EGRN), 416–443 (SENH…KKEQ), and 478–487 (KRMEKSKETK). Over residues 534-543 (VESNSNLQEE) the composition is skewed to polar residues. The segment covering 550–566 (KPCEAKENREQPAKKSF) has biased composition (basic and acidic residues). An IQ domain is found at 568–597 (EEEAARIIQSMYRGYDVRRWEPIKKLKEIA). Residues 595 to 672 (EIATVREQMG…SIQDKLDSLK (78 aa)) enclose the BAG domain. The segment covering 724-741 (SPEEHPMSVLNRTDEKQA) has biased composition (basic and acidic residues). Disordered regions lie at residues 724-749 (SPEE…ETEE), 764-799 (ATEN…GNGM), 817-975 (EPIN…ISKE), and 1015-1043 (EKKL…DAVL). Low complexity predominate over residues 840-852 (ASEVSEAETNSSE). Basic and acidic residues predominate over residues 853–871 (NENRKGEDDIVLHSEKNVE). Composition is skewed to polar residues over residues 885–899 (QPLS…TREG) and 919–932 (SPNN…QTSE). A compositionally biased stretch (basic and acidic residues) spans 934-951 (QDEKEQSPETEVIVKEQP). The stretch at 971–1024 (GISKETKKLMEENQRFKETMETLVKAGREQLEVISKLTSRVKSLEKKLSHKKKT) forms a coiled coil. The segment covering 1018–1031 (LSHKKKTQIRRRAS) has biased composition (basic residues). Positions 1034 to 1043 (MSVSPTDAVL) are enriched in polar residues.

Binds to the ATPase domain of HSP70/HSC70 chaperones. Interacts with calmodulins CAM1, CAM2, CAM3, CAM4, CAM6 and CAM7. Interacts with BAGP1 and APCB1. Detected in stems, leaves, flowers and roots.

Co-chaperone that regulates diverse cellular pathways, such as programmed cell death and stress responses. Involved in plant basal resistance. Involved in basal heat response through the regulation of the heat induced small HSP (sHSP) transcriptional cascade. Functionally, induces autophagy. In Arabidopsis thaliana (Mouse-ear cress), this protein is BAG family molecular chaperone regulator 6.